A 176-amino-acid polypeptide reads, in one-letter code: NAD(P)H-quinone oxidoreductase subunit 6, chloroplastic (176 aa).

5 helical membrane passes run 10–30 (FLLVFLGSGLILGSLGVVLLT), 32–52 (PIFSAFSLGLVLVCISLFYIL), 63–83 (LLIYVGAINILIIFAVMFMNS), 92–112 (LWTVGDGITLIVCTSIFVSLV), and 152–172 (FFLPFELISIILLVALIGTIV).

It belongs to the complex I subunit 6 family. In terms of assembly, NDH is composed of at least 16 different subunits, 5 of which are encoded in the nucleus.

The protein resides in the plastid. It localises to the chloroplast thylakoid membrane. The catalysed reaction is a plastoquinone + NADH + (n+1) H(+)(in) = a plastoquinol + NAD(+) + n H(+)(out). The enzyme catalyses a plastoquinone + NADPH + (n+1) H(+)(in) = a plastoquinol + NADP(+) + n H(+)(out). NDH shuttles electrons from NAD(P)H:plastoquinone, via FMN and iron-sulfur (Fe-S) centers, to quinones in the photosynthetic chain and possibly in a chloroplast respiratory chain. The immediate electron acceptor for the enzyme in this species is believed to be plastoquinone. Couples the redox reaction to proton translocation, and thus conserves the redox energy in a proton gradient. The polypeptide is NAD(P)H-quinone oxidoreductase subunit 6, chloroplastic (ndhG) (Cicer arietinum (Chickpea)).